We begin with the raw amino-acid sequence, 299 residues long: Glycine--tRNA ligase alpha subunit (299 aa).

It belongs to the class-II aminoacyl-tRNA synthetase family. Tetramer of two alpha and two beta subunits.

The protein localises to the cytoplasm. It carries out the reaction tRNA(Gly) + glycine + ATP = glycyl-tRNA(Gly) + AMP + diphosphate. This chain is Glycine--tRNA ligase alpha subunit, found in Dictyoglomus thermophilum (strain ATCC 35947 / DSM 3960 / H-6-12).